We begin with the raw amino-acid sequence, 546 residues long: Sterol O-acyltransferase 1 (546 aa).

The residue at position 1 (methionine 1) is an N-acetylmethionine. The interval 1–37 is disordered; that stretch reads MVGEEKMSLRNRLSKSGENPEQDEAQRSVSDTQSNGR. Over 1-134 the chain is Cytoplasmic; the sequence is MVGEEKMSLR…LDELFEVDHI (134 aa). Serine 8 is subject to Phosphoserine. The segment covering 27–37 has biased composition (polar residues); that stretch reads RSVSDTQSNGR. Histidine 133 lines the cholesterol pocket. The chain crosses the membrane as a helical span at residues 135-156; sequence RTIYHMFIGLLILFILSTLVVD. The Lumenal segment spans residues 157-176; it reads YIDEGRLVLEFNLLGYAFGK. A helical transmembrane segment spans residues 177–202; it reads LPTVIWTWWAMFLSTLSIPYFLFQRW. The Cytoplasmic segment spans residues 203 to 214; that stretch reads AHGYSKTSHPLI. A helical membrane pass occupies residues 215 to 240; sequence YSLSHGFFFLVFQLGILGFVPTYVVL. The Lumenal segment spans residues 241–248; that stretch reads AYTLPPAS. A helical membrane pass occupies residues 249-272; that stretch reads RFIVILEQIRMVMKAHSFVRENVP. The Cytoplasmic segment spans residues 273-315; the sequence is RVLNAAKEKSSTVPVPTVNQYLYFLFAPTLIYRDSYPRTPTVR. Residues 316–348 traverse the membrane as a helical segment; the sequence is WGYVAVQFLQVFGCLFYVYYIFERLCAPLFRNI. Residues 349 to 365 are Lumenal-facing; it reads KQEPFSARVLVLCVFNS. A helical membrane pass occupies residues 366 to 391; it reads ILPGVLMLFLTFFAFLHCWLNAFAEM. The Cytoplasmic segment spans residues 392 to 439; it reads LRFGDRMFYKDWWNSTSYSNYYRTWNVVVHDWLYYYAYKDLLWFFSKR. The FYXDWWN motif motif lies at 399–405; the sequence is FYKDWWN. Asparagine 411, arginine 414, asparagine 417, histidine 421, tyrosine 429, lysine 441, and serine 452 together coordinate an acyl-CoA. A helical membrane pass occupies residues 440–464; that stretch reads FKSAAMLAVFALSAVVHEYALAVCL. Histidine 456 is an active-site residue. The Lumenal portion of the chain corresponds to 465–470; the sequence is SYFYPV. The helical transmembrane segment at 471–486 threads the bilayer; it reads LFVLFMFFGMAFNFIV. At 487–492 the chain is on the cytoplasmic side; it reads NDSRKR. The chain crosses the membrane as a helical span at residues 493-524; sequence PIWNIMVWASLFLGHGVILCFYSQEWYARQHC. A disulfide bridge links cysteine 524 with cysteine 542. The Lumenal segment spans residues 525–546; it reads PLKNPTFLDYVRPRSWTCQYVF.

It belongs to the membrane-bound acyltransferase family. Sterol o-acyltransferase subfamily. In terms of assembly, may form homo- or heterodimers. Interacts with UBIAD1.

It is found in the endoplasmic reticulum membrane. The enzyme catalyses a sterol + a long-chain fatty acyl-CoA = a long-chain 3-hydroxysterol ester + CoA. It catalyses the reaction cholesterol + an acyl-CoA = a cholesterol ester + CoA. It carries out the reaction cholesterol + (9Z)-octadecenoyl-CoA = cholesteryl (9Z-octadecenoate) + CoA. The catalysed reaction is cholesterol + hexadecanoyl-CoA = cholesteryl hexadecanoate + CoA. The enzyme catalyses octadecanoyl-CoA + cholesterol = cholesteryl octadecanoate + CoA. It catalyses the reaction (9Z,12Z)-octadecadienoyl-CoA + cholesterol = cholesteryl (9Z,12Z)-octadecadienoate + CoA. It carries out the reaction (5Z,8Z,11Z,14Z)-eicosatetraenoyl-CoA + cholesterol = cholesteryl (5Z,8Z,11Z,14Z)-eicosatetraenoate + CoA. The catalysed reaction is (9Z)-hexadecenoyl-CoA + cholesterol = cholesteryl (9Z)-hexadecenoate + CoA. The enzyme catalyses (11Z)-octadecenoyl-CoA + cholesterol = cholesteryl (11Z)-octadecenoate + CoA. It catalyses the reaction (7Z)-octadecenoyl-CoA + cholesterol = cholesteryl (7Z)-octadecenoate + CoA. Catalyzes the formation of fatty acid-cholesterol esters, which are less soluble in membranes than cholesterol. Plays a role in lipoprotein assembly and dietary cholesterol absorption. Preferentially utilizes oleoyl-CoA ((9Z)-octadecenoyl-CoA) as a substrate: shows a higher activity towards an acyl-CoA substrate with a double bond at the delta-9 position (9Z) than towards saturated acyl-CoA or an unsaturated acyl-CoA with a double bond at the delta-7 (7Z) or delta-11 (11Z) positions. In Cricetulus griseus (Chinese hamster), this protein is Sterol O-acyltransferase 1 (SOAT1).